The primary structure comprises 1063 residues: MKYNKTLALIPAILLAACGGGDKQSIDEKPRPGSMVYSFPMDGQADVSPKADIVLRFSHAITDDEATLQNKIILQSSGQSQPFTVTLIDSGKSLKLEPANPLATGEEFTVTFQEPLAAEGGRQITTPNATGDDGIQFATRGAYAGLAELANTADTFDIAWQVPASDSPFQAMNFSTFRFAMTQPVHPEWQSLGGSIQLRDASGQEVPATVLVKGNRITVDPCVTPEPSQCGSKQDILNTGETYTLQLTNLASLTDSSEENRFTGEFTFTPRDTGPTVVLQQTAVDSGNGELTSVLNGQALNAVTLNSVLQGEAGPSQQTGDLFAELAYAPAFDADEALPLRIPKGSVLKSTSLNVLVGGKVQVLDAATGEDQQTGTIKVTMLSDASGYMSPNQYTDDINAPRHITLFMDVSMNTEAAQPNAALSQDLMGVELRGIALVRDGVLTIDAIGMVEPNLLGQEFTDSTIAFHLQAATDADSVLDAENLRELDATPPSLVSWMPGPANAVPATRQSMQRPGDPIILFFDEPLDPASVENGVELIENGAPVTNLQARLDGTALVLNPQGGLKHGVPYSVSVDGLTDLAGNRAMVSPLSFELDSIEENGSPGNKGFPLALTTYPGYPCETDYENTLDLENGVFGKCWTADANNAGDVLPVSKMPADRPITVVFSKSLDLDSVIVGETFTVQEIAQEANGTVTVLNQQVAGRLEKNNQRIRFYPEQPWQVGAHYRYILASSEQSGTCTPGQYTSICDEDGIPLKTDLLEGLNDGDGNNGPDNLEIVFTGSEARSTVFTPLRNLPIRDTNSNLAIDCDDLGSESCLEPFNHQGSDSEGFLPSANAAKLLVTQDHAEDARVGCAVDGADCPRKKFIYQTYALNTEVIGPTVDPDTGRDAVKVLLYPTQLATTSLDVHLSLLSTVSSTGPQVLRMRYAKDDPECTGASCARNSLIPGYITENDQGETIFKTKAELFLDAPGLKATASILGIPTDLPLTHNLFGYPFTLELEGRVVFFDDGRMQIEQRNFNVPHIDVEAVALGIINTEIPLIIPEQGVYLNFISNPVKEIPAQYE.

A signal peptide spans 1–17 (MKYNKTLALIPAILLAA). Residue Cys-18 is the site of N-palmitoyl cysteine attachment. Cys-18 is lipidated: S-diacylglycerol cysteine.

As to quaternary structure, interacts with the outer membrane protein AupA.

It localises to the cell inner membrane. In terms of biological role, required for growth on alkanes. Probably involved in the uptake of micelle-solubilized alkanes. May facilitate the transfer of alkanes from the outer membrane to the inner membrane. This Marinobacter nauticus (strain ATCC 49840 / DSM 8798 / CIP 103578 / SP17) (Marinobacter hydrocarbonoclasticus) protein is Alkane uptake protein B.